The chain runs to 231 residues: Large ribosomal subunit protein uL1 (231 aa).

Belongs to the universal ribosomal protein uL1 family. In terms of assembly, part of the 50S ribosomal subunit.

Its function is as follows. Binds directly to 23S rRNA. The L1 stalk is quite mobile in the ribosome, and is involved in E site tRNA release. In terms of biological role, protein L1 is also a translational repressor protein, it controls the translation of the L11 operon by binding to its mRNA. The polypeptide is Large ribosomal subunit protein uL1 (Halalkalibacterium halodurans (strain ATCC BAA-125 / DSM 18197 / FERM 7344 / JCM 9153 / C-125) (Bacillus halodurans)).